The primary structure comprises 278 residues: MTVLHSVDFFPSGHSPVAIEPRLPQAAFPEHHHDFHEIVIVEHGTGIHVFNGQPYTISGGTVCFVRDHDRHMYEHTDNLCLTNVLYRSPDAFQFLSGLNQLLPQEKDGHYPSHWRVNQSTLQQVRQLVTQMEQAEENTESHALASRELTFMQLLVLLRRSSLVEGLENNDARLNQLMAWLEDHFAEEVSWETVADVFSLSLRTLHRQLKQHTGLTPQRYLNRLRLIKARHLLRHTDESVTDIAYRCGFGDSNHFSTLFRREFSWSPREIRQGRDASLQ.

Residues 174 to 272 (NQLMAWLEDH…SWSPREIRQG (99 aa)) enclose the HTH araC/xylS-type domain. DNA-binding regions (H-T-H motif) lie at residues 191–212 (ETVADVFSLSLRTLHRQLKQHT) and 239–262 (VTDIAYRCGFGDSNHFSTLFRREF).

Binds DNA as a dimer.

Its subcellular location is the cytoplasm. In terms of biological role, activates expression of the rhaBAD and rhaT operons. This chain is HTH-type transcriptional activator RhaS, found in Enterobacter sp. (strain 638).